Here is a 258-residue protein sequence, read N- to C-terminus: Histidine/lysine/arginine/ornithine transport ATP-binding protein HisP (258 aa).

The ABC transporter domain occupies 7–253; sequence LHVIDLHKRY…PQSPRLQQFL (247 aa). ATP-binding residues include Ser41, Gly42, Gly44, Lys45, Ser46, and Thr47.

This sequence belongs to the ABC transporter superfamily. As to quaternary structure, the HisPMQJ complex is composed of two ATP-binding proteins (HisP), two transmembrane proteins (HisM and HisQ) and a solute-binding protein (HisJ). The HisPMQ-ArgT complex is composed of two ATP-binding proteins (HisP), two transmembrane proteins (HisM and HisQ) and a solute-binding protein (ArgT).

The protein resides in the cell inner membrane. It catalyses the reaction a polar amino acid(out) + ATP + H2O = a polar amino acid(in) + ADP + phosphate + H(+). It carries out the reaction L-histidine(out) + ATP + H2O = L-histidine(in) + ADP + phosphate + H(+). The enzyme catalyses L-lysine(out) + ATP + H2O = L-lysine(in) + ADP + phosphate + H(+). The catalysed reaction is L-arginine(out) + ATP + H2O = L-arginine(in) + ADP + phosphate + H(+). It catalyses the reaction L-ornithine(out) + ATP + H2O = L-ornithine(in) + ADP + phosphate + H(+). With respect to regulation, isolated, soluble HisP has a very low ATPase activity. ATPase activity is slightly increased in the presence of HisM and HisQ, and strongly increased when HisJ is also present. Part of the ABC transporter complex HisPMQJ involved in histidine transport. Is also part of the ABC transporter complex HisPMQ-ArgT involved in lysine/arginine/ornithine transport. Shows ATPase activity. Responsible for energy coupling to the transport system. This is Histidine/lysine/arginine/ornithine transport ATP-binding protein HisP from Salmonella typhimurium (strain LT2 / SGSC1412 / ATCC 700720).